A 447-amino-acid chain; its full sequence is MITMSRIRSLAAFAVFVILGVAAVLPAQAEVRIDITRGQMKPLPIAIPDFAGASAQDNRMGADIARVVSADLERSGLFKPIDPKAFIQNAASLQAGPRFPDWKAINAEALVSGKIESGADGRVRVEFRLWDVFNEAYMTGWTLSASPQDWRRLSHKVADAIYKRVTGEDGYFDTQIVYIAESGPKNDRKKRLSIMDQDGENHRFLTDGSELVLTPRFSPSAREITYLSYFKGVPRVYIFNLDTGRRESLGNFPGMTFAPRFSPDGNKVVFSMAENGNTEIYEMNLLTRQKRQLTMNPAIDTAPSYSPDGQQIVFESDRGGGQQIYTMSADGSNPQRISFGDGRYGTPVWSPRGDLIAFTKQKGGQFFIGVMRTDGSGERLLAEGFLVEGPTWAPNGRVLSFFRESPSDERGRGQVVRLYTIDLTGVNERVLLTPVDGSDPAWSPLIP.

Positions 1-29 are cleaved as a signal peptide; sequence MITMSRIRSLAAFAVFVILGVAAVLPAQA.

The protein belongs to the TolB family. As to quaternary structure, the Tol-Pal system is composed of five core proteins: the inner membrane proteins TolA, TolQ and TolR, the periplasmic protein TolB and the outer membrane protein Pal. They form a network linking the inner and outer membranes and the peptidoglycan layer.

Its subcellular location is the periplasm. Functionally, part of the Tol-Pal system, which plays a role in outer membrane invagination during cell division and is important for maintaining outer membrane integrity. This Paramagnetospirillum magneticum (strain ATCC 700264 / AMB-1) (Magnetospirillum magneticum) protein is Tol-Pal system protein TolB.